Reading from the N-terminus, the 193-residue chain is Translocation protein SEC72 (193 aa).

In terms of assembly, component of the heterotetrameric Sec62/63complex composed of SEC62, SEC63, SEC71 and SEC72. The Sec62/63 complex associates with the Sec61 complex to form the Sec complex. May interact with protein YLR301W. Part of a complex consisting of KAR2, SEC63, SEC66 and SEC72.

It is found in the cytoplasm. Its function is as follows. Acts as a non-essential component of the Sec62/63 complex which is involved in SRP-independent post-translational translocation across the endoplasmic reticulum (ER) and functions together with the Sec61 complex and KAR2 in a channel-forming translocon complex. A cycle of assembly and disassembly of Sec62/63 complex from SEC61 may govern the activity of the translocon. SEC72 may be involved in signal peptide recognition for a defined subset of leader peptides, or may increase the efficiency of unusual or 'difficult' secretory precursors to the translocation pore, it may be that this protein binds charged leader peptides to the membrane until they engage the translocation apparatus. The sequence is that of Translocation protein SEC72 (SEC72) from Saccharomyces cerevisiae (strain ATCC 204508 / S288c) (Baker's yeast).